Reading from the N-terminus, the 227-residue chain is Probable chorismate pyruvate-lyase (227 aa).

Positions 75, 113, and 173 each coordinate substrate. A disordered region spans residues S192–R227. The span at R200 to A212 shows a compositional bias: basic and acidic residues.

It belongs to the UbiC family.

Its subcellular location is the cytoplasm. It carries out the reaction chorismate = 4-hydroxybenzoate + pyruvate. It participates in cofactor biosynthesis; ubiquinone biosynthesis. Removes the pyruvyl group from chorismate, with concomitant aromatization of the ring, to provide 4-hydroxybenzoate (4HB) for the ubiquinone pathway. In Paraburkholderia xenovorans (strain LB400), this protein is Probable chorismate pyruvate-lyase.